The following is a 217-amino-acid chain: 3,4-dihydroxy-2-butanone 4-phosphate synthase (217 aa).

D-ribulose 5-phosphate is bound by residues 37-38 (RE), D42, 150-154 (RRGHT), and E174. Mg(2+) is bound at residue E38. H153 lines the Mg(2+) pocket.

Belongs to the DHBP synthase family. As to quaternary structure, homodimer. It depends on Mg(2+) as a cofactor. Mn(2+) is required as a cofactor.

The catalysed reaction is D-ribulose 5-phosphate = (2S)-2-hydroxy-3-oxobutyl phosphate + formate + H(+). The protein operates within cofactor biosynthesis; riboflavin biosynthesis; 2-hydroxy-3-oxobutyl phosphate from D-ribulose 5-phosphate: step 1/1. In terms of biological role, catalyzes the conversion of D-ribulose 5-phosphate to formate and 3,4-dihydroxy-2-butanone 4-phosphate. This Shewanella putrefaciens (strain CN-32 / ATCC BAA-453) protein is 3,4-dihydroxy-2-butanone 4-phosphate synthase.